The sequence spans 115 residues: Mediator of RNA polymerase II transcription subunit 9 (115 aa).

The segment at 1 to 31 (MATGGTVRPAEEPEEEEEEEDEAVEEEEEED) is disordered. The segment covering 12–31 (EPEEEEEEEDEAVEEEEEED) has biased composition (acidic residues). Positions 31 to 107 (DYTFLPLVHD…SELLQKYKSL (77 aa)) form a coiled coil.

The protein belongs to the Mediator complex subunit 9 family. In terms of assembly, component of the Mediator complex.

Its subcellular location is the nucleus. In terms of biological role, component of the Mediator complex, a coactivator involved in the regulated transcription of nearly all RNA polymerase II-dependent genes. Mediator functions as a bridge to convey information from gene-specific regulatory proteins to the basal RNA polymerase II transcription machinery. Mediator is recruited to promoters by direct interactions with regulatory proteins and serves as a scaffold for the assembly of a functional preinitiation complex with RNA polymerase II and the general transcription factors. The protein is Mediator of RNA polymerase II transcription subunit 9 (med9) of Xenopus laevis (African clawed frog).